The primary structure comprises 146 residues: PTS system fructose-specific EIIA component (146 aa).

Positions 1–124 (MISVIISGHG…NLKAMSQQSF (124 aa)) constitute a PTS EIIA type-4 domain. Catalysis depends on histidine 9, which acts as the Tele-phosphohistidine intermediate. A Phosphohistidine; by HPr modification is found at histidine 9.

Its subcellular location is the cytoplasm. In terms of biological role, the phosphoenolpyruvate-dependent sugar phosphotransferase system (sugar PTS), a major carbohydrate active transport system, catalyzes the phosphorylation of incoming sugar substrates concomitantly with their translocation across the cell membrane. The enzyme II LevDE PTS system is involved in fructose transport. Functionally, levD and LevE act as negative regulators of the levanase operon. They may be involved in a PTS-mediated phosphorylation of a regulator. The polypeptide is PTS system fructose-specific EIIA component (Bacillus subtilis (strain 168)).